An 877-amino-acid chain; its full sequence is Leucine--tRNA ligase (877 aa).

The short motif at 48–58 (PYPSGKLHMGH) is the 'HIGH' region element. The 'KMSKS' region motif lies at 636-640 (KMSKS). K639 is a binding site for ATP.

The protein belongs to the class-I aminoacyl-tRNA synthetase family.

The protein resides in the cytoplasm. The enzyme catalyses tRNA(Leu) + L-leucine + ATP = L-leucyl-tRNA(Leu) + AMP + diphosphate. The chain is Leucine--tRNA ligase from Ralstonia nicotianae (strain ATCC BAA-1114 / GMI1000) (Ralstonia solanacearum).